Consider the following 28-residue polypeptide: Dermaseptin-H2 (28 aa).

The protein belongs to the frog skin active peptide (FSAP) family. Dermaseptin subfamily. In terms of tissue distribution, expressed by the skin glands.

Its subcellular location is the secreted. Its function is as follows. Possesses a potent antimicrobial activity against Gram-positive and Gram-negative bacteria. Probably acts by disturbing membrane functions with its amphipathic structure. The sequence is that of Dermaseptin-H2 from Pithecopus azureus (Orange-legged monkey tree frog).